The sequence spans 187 residues: Peptidoglycan-recognition protein 3 (187 aa).

An N-terminal signal peptide occupies residues 1–19 (MKAFLVALLISIELALVFA). Disulfide bonds link cysteine 21-cysteine 144 and cysteine 58-cysteine 64. One can recognise an N-acetylmuramoyl-L-alanine amidase domain in the interval 43 to 170 (KPLKYVIINH…RTIRQTNSPG (128 aa)). Residue asparagine 51 is glycosylated (N-linked (GlcNAc...) asparagine).

It belongs to the N-acetylmuramoyl-L-alanine amidase 2 family.

Its subcellular location is the secreted. Functionally, peptidoglycan-recognition protein probably involved in innate immunity by binding to peptidoglycans (PGN) of bacteria and activating the prophenoloxidase (proPO) cascade immune response. Binds to 1,3-beta-D-glucan and PGN. This is Peptidoglycan-recognition protein 3 (PGRP-3) from Holotrichia diomphalia (Korean black chafer).